The following is a 329-amino-acid chain: ATP-dependent (S)-NAD(P)H-hydrate dehydratase (329 aa).

A mitochondrion-targeting transit peptide spans 1 to 28 (MALGPGCRAVRGCRPVLKRAFSLHKAHS). The 292-residue stretch at 35-326 (ILQLVRSVVP…AEVGPAFRRL (292 aa)) folds into the YjeF C-terminal domain. An N6-acetyllysine modification is found at Lys49. Tyr67 carries the post-translational modification Phosphotyrosine. Residues Gly135 and 188–194 (NHVEFGR) contribute to the (6S)-NADPHX site. ATP-binding positions include 228-232 (KGEQD) and 247-256 (GSGRRCGGQG). Asp257 is a (6S)-NADPHX binding site.

Belongs to the NnrD/CARKD family. Requires Mg(2+) as cofactor.

The protein localises to the mitochondrion. The enzyme catalyses (6S)-NADHX + ATP = ADP + phosphate + NADH + H(+). It carries out the reaction (6S)-NADPHX + ATP = ADP + phosphate + NADPH + H(+). Its function is as follows. Catalyzes the dehydration of the S-form of NAD(P)HX at the expense of ATP, which is converted to ADP. Together with NAD(P)HX epimerase, which catalyzes the epimerization of the S- and R-forms, the enzyme allows the repair of both epimers of NAD(P)HX, a damaged form of NAD(P)H that is a result of enzymatic or heat-dependent hydration. The sequence is that of ATP-dependent (S)-NAD(P)H-hydrate dehydratase from Bos taurus (Bovine).